The following is a 358-amino-acid chain: Peptide chain release factor 1 (358 aa).

Position 233 is an N5-methylglutamine (Gln-233).

It belongs to the prokaryotic/mitochondrial release factor family. In terms of processing, methylated by PrmC. Methylation increases the termination efficiency of RF1.

It localises to the cytoplasm. Peptide chain release factor 1 directs the termination of translation in response to the peptide chain termination codons UAG and UAA. The chain is Peptide chain release factor 1 from Lysinibacillus sphaericus (strain C3-41).